The primary structure comprises 523 residues: Factor arrest protein 8 (523 aa).

A coiled-coil region spans residues 26–76 (TKNERDRITWELERSEMKARIAELEGENRDLKHQLNQIQSKAVSPEGEKEE). Positions 61-80 (NQIQSKAVSPEGEKEEKHVP) are disordered. A compositionally biased stretch (basic and acidic residues) spans 71–80 (EGEKEEKHVP). Phosphoserine is present on Ser115. Position 132 is a phosphothreonine (Thr132). Positions 150–171 (ALLDTKPNPKQGPSESPSPTKV) are disordered. Polar residues predominate over residues 160 to 171 (QGPSESPSPTKV).

In terms of assembly, component of a complex at least composed of FAR3, FAR7, FAR8, FAR10, FAR11 and VPS64.

It localises to the cytoplasm. It is found in the endoplasmic reticulum. Participates in the control of the reentry into the cell cycle following pheromone treatment. The chain is Factor arrest protein 8 (FAR8) from Saccharomyces cerevisiae (strain ATCC 204508 / S288c) (Baker's yeast).